Consider the following 58-residue polypeptide: Rho-conotoxin TIA (58 aa).

Residues 1-16 form the signal peptide; the sequence is MFTVFLLVVLATTGVS. Positions 17 to 38 are excised as a propeptide; that stretch reads FTLDRASDGGNAVAKKSDVTAR. Positions 40–42 are interaction with ADRA1B; that stretch reads NWR. Disulfide bonds link Cys43/Cys49 and Cys44/Cys57. The segment at 45–47 is lacks the Ser-Xaa-Pro motif that is crucial for potent interaction with nAChR; that stretch reads LIP. Residue Cys57 is modified to Cysteine amide.

It belongs to the conotoxin A superfamily. In terms of tissue distribution, expressed by the venom duct.

The protein resides in the secreted. Functionally, allosteric inhibitor of alpha-1B adrenergic receptors (ADRA1B). Binds to an allosteric modulatory site on transmembrane helix 6 and 7 at the base of extracellular loop 3 of ADRA1B. Also weakly inhibits alpha-1A (ADRA1A) and alpha-1D (ADRA1D) adrenergic receptors in a competitive manner. Potently inhibits contractions of vas deferens, spleen and aorta in response to noradrenaline. May also inhibits nicotinic acetylcholine receptors with a possible distinct nAChR binding mode from other alpha-conotoxins, due to a different three residue motif (lacks the Ser-Xaa-Pro motif). The protein is Rho-conotoxin TIA of Conus tulipa (Fish-hunting cone snail).